The sequence spans 293 residues: Beta-lactamase (293 aa).

An N-terminal signal peptide occupies residues 1–27 (MRFTATVLSRVATGLALGLSMATASLA). Ser-74 acts as the Acyl-ester intermediate in catalysis. 238–240 (KSG) is a binding site for substrate.

It belongs to the class-A beta-lactamase family.

The protein resides in the periplasm. It catalyses the reaction a beta-lactam + H2O = a substituted beta-amino acid. Its function is as follows. Hydrolyzes beta-lactams antibiotics. Rates of hydrolysis relative to benzylpenicillin =100: ampicillin = 27, carbenicillin = 25, cloxacillin = 0, cephaloridine = 4. This Rhodobacter capsulatus (Rhodopseudomonas capsulata) protein is Beta-lactamase.